A 41-amino-acid chain; its full sequence is MNFLMRAIFSLLLLFTLSIPVISDCVAMAIESRFKYMMLLF.

The first 23 residues, 1–23 (MNFLMRAIFSLLLLFTLSIPVIS), serve as a signal peptide directing secretion.

This is an uncharacterized protein from Escherichia coli (strain K12).